The sequence spans 115 residues: MGVEISLDPPVCPIQANGGVSKHKMINHTDRHMAYKVKSSNNSNYSVNLIYGILKVCDVKELVITRKPGKPQADKLIIQYCMVVDENTDPKPLFANGVPPGELSGETVIKLSAAE.

The MSP domain maps to 1 to 115 (MGVEISLDPP…ETVIKLSAAE (115 aa)).

This is an uncharacterized protein from Caenorhabditis elegans.